The following is a 571-amino-acid chain: Phosphatidylinositol-3,5-bisphosphate 3-phosphatase MTMR2 (571 aa).

The GRAM domain occupies 1 to 67; sequence MEEPPLLPGE…GVINRVEKIG (67 aa). The 376-residue stretch at 133–508 folds into the Myotubularin phosphatase domain; the sequence is GWKVYDPIWE…RHLELWVGYY (376 aa). A 1,2-diacyl-sn-glycero-3-phospho-(1D-myo-inositol-3,5-bisphosphate) contacts are provided by N258, N283, and I284. 3 residues coordinate a 1,2-diacyl-sn-glycero-3-phospho-(1D-myo-inositol-3-phosphate): N258, N283, and I284. The Phosphocysteine intermediate role is filled by C345. The a 1,2-diacyl-sn-glycero-3-phospho-(1D-myo-inositol-3,5-bisphosphate) site is built by S346, D347, G348, W349, D350, R351, R387, and R391. Residues S346, D347, G348, W349, D350, and R351 each coordinate a 1,2-diacyl-sn-glycero-3-phospho-(1D-myo-inositol-3-phosphate). R391 provides a ligand contact to a 1,2-diacyl-sn-glycero-3-phospho-(1D-myo-inositol-3-phosphate). A coiled-coil region spans residues 521-553; it reads VHNRYKELLAKRAELQKKVEELQREITNRSTSS. Residues 544 to 571 are disordered; that stretch reads REITNRSTSSSERAGSPAQCVTPVQTVV.

It belongs to the protein-tyrosine phosphatase family. Non-receptor class myotubularin subfamily. As to quaternary structure, homooligomer and heterooligomer.

The protein resides in the cytoplasm. It is found in the early endosome membrane. The enzyme catalyses a 1,2-diacyl-sn-glycero-3-phospho-(1D-myo-inositol-3,5-bisphosphate) + H2O = a 1,2-diacyl-sn-glycero-3-phospho-(1D-myo-inositol-5-phosphate) + phosphate. The catalysed reaction is a 1,2-diacyl-sn-glycero-3-phospho-(1D-myo-inositol-3-phosphate) + H2O = a 1,2-diacyl-sn-glycero-3-phospho-(1D-myo-inositol) + phosphate. It carries out the reaction 1,2-dioctanoyl-sn-glycero-3-phospho-(1-D-myo-inositol-3-phosphate) + H2O = 1,2-dioctanoyl-sn-glycero-3-phospho-(1D-myo-inositol) + phosphate. It catalyses the reaction 1,2-dioctanoyl-sn-glycero-3-phospho-(1D-myo-inositol-3,5-bisphosphate) + H2O = 1,2-dioctanoyl-sn-glycero-3-phospho-(1D-myo-inositol-5-phosphate) + phosphate. Functionally, lipid phosphatase that specifically dephosphorylates the D-3 position of phosphatidylinositol 3-phosphate and phosphatidylinositol 3,5-bisphosphate, generating phosphatidylinositol and phosphatidylinositol 5-phosphate. Regulates the level of these phosphoinositides critical for various biological processes including autophagy initiation and autophagosome maturation. The protein is Phosphatidylinositol-3,5-bisphosphate 3-phosphatase MTMR2 of Gallus gallus (Chicken).